Reading from the N-terminus, the 466-residue chain is Glutamate--tRNA ligase (466 aa).

The 'HIGH' region motif lies at 11–21; sequence PSPTGFIHLGN. The 'KMSKS' region motif lies at 243 to 247; it reads KMSKR. K246 provides a ligand contact to ATP.

This sequence belongs to the class-I aminoacyl-tRNA synthetase family. Glutamate--tRNA ligase type 1 subfamily. Monomer.

It is found in the cytoplasm. The enzyme catalyses tRNA(Glu) + L-glutamate + ATP = L-glutamyl-tRNA(Glu) + AMP + diphosphate. In terms of biological role, catalyzes the attachment of glutamate to tRNA(Glu) in a two-step reaction: glutamate is first activated by ATP to form Glu-AMP and then transferred to the acceptor end of tRNA(Glu). This Cupriavidus necator (strain ATCC 17699 / DSM 428 / KCTC 22496 / NCIMB 10442 / H16 / Stanier 337) (Ralstonia eutropha) protein is Glutamate--tRNA ligase.